The primary structure comprises 802 residues: Copper-exporting P-type ATPase (802 aa).

HMA domains lie at 5–70 (KKTT…YGVA) and 72–138 (ETVE…YDAS). Cu(+) is bound by residues Cys-16, Cys-19, Cys-83, and Cys-86. 6 helical membrane passes run 161 to 181 (LIISAVLSLPLLMLMFVHLFN), 192 to 212 (WFQFILATPVQFIIGWQFYVG), 224 to 244 (MDVLVAVGTSAAYFYSIYEMV), 256 to 276 (LYFETSAVLITLILFGKYLEA), 411 to 431 (YFVPIVVGIALLTFIVWITLV), and 438 to 458 (PALVASISVLVIACPCALGLA). The active-site 4-aspartylphosphate intermediate is Asp-495. Mg(2+) contacts are provided by Asp-690 and Asp-694. 2 helical membrane-spanning segments follow: residues 748–767 (LFWAFGYNIAGIPIAALGLL) and 771–790 (VAGAAMALSSVSVVTNALRL).

It belongs to the cation transport ATPase (P-type) (TC 3.A.3) family. Type IB subfamily.

It is found in the cell membrane. It catalyses the reaction Cu(+)(in) + ATP + H2O = Cu(+)(out) + ADP + phosphate + H(+). Functionally, involved in copper export. This is Copper-exporting P-type ATPase (copA) from Staphylococcus aureus (strain USA300 / TCH1516).